We begin with the raw amino-acid sequence, 456 residues long: Kynurenine 3-monooxygenase (456 aa).

The protein belongs to the aromatic-ring hydroxylase family. KMO subfamily. FAD serves as cofactor.

The catalysed reaction is L-kynurenine + NADPH + O2 + H(+) = 3-hydroxy-L-kynurenine + NADP(+) + H2O. The protein operates within cofactor biosynthesis; NAD(+) biosynthesis; quinolinate from L-kynurenine: step 1/3. Its function is as follows. Catalyzes the hydroxylation of L-kynurenine (L-Kyn) to form 3-hydroxy-L-kynurenine (L-3OHKyn). Required for synthesis of quinolinic acid. The protein is Kynurenine 3-monooxygenase of Xanthomonas campestris pv. campestris (strain B100).